The chain runs to 229 residues: Small ribosomal subunit protein uS3 (229 aa).

One can recognise a KH type-2 domain in the interval 17–85; it reads VKEWIKDEVR…NPQVSVDEVE (69 aa). The tract at residues 202–229 is disordered; sequence LRGESGEDEGDKGDEQGGEAQEAEGAGA. The segment covering 219 to 229 has biased composition (low complexity); that stretch reads GEAQEAEGAGA.

The protein belongs to the universal ribosomal protein uS3 family. As to quaternary structure, part of the 30S ribosomal subunit.

In terms of biological role, binds the lower part of the 30S subunit head. In Archaeoglobus fulgidus (strain ATCC 49558 / DSM 4304 / JCM 9628 / NBRC 100126 / VC-16), this protein is Small ribosomal subunit protein uS3.